The sequence spans 956 residues: RNA-binding protein 44 (956 aa).

The tract at residues 301 to 321 (DNTQNNQNQSYNPTEENDHNV) is disordered. The RRM domain occupies 750 to 824 (SLLCITCLPG…HAVQVVHLSG (75 aa)). The segment at 831–855 (KPSDLSHSASESHKEDTAGDELRTK) is disordered. Basic and acidic residues predominate over residues 840-854 (SESHKEDTAGDELRT).

Its subcellular location is the cytoplasm. Component of intercellular bridges during meiosis. Intercellular bridges are evolutionarily conserved structures that connect differentiating germ cells. Not required for fertility. This chain is RNA-binding protein 44 (rbm44), found in Danio rerio (Zebrafish).